Reading from the N-terminus, the 205-residue chain is Ephrin-A1 (205 aa).

The first 17 residues, 1–17, serve as a signal peptide directing secretion; the sequence is MEFLWAPLLGLCCSLAA. Residues 18–161 form the Ephrin RBD domain; it reads ADRHIVFWNS…THNPQAHVNP (144 aa). N-linked (GlcNAc...) asparagine glycosylation occurs at Asn26. Disulfide bonds link Cys51-Cys92 and Cys80-Cys140. The GPI-anchor amidated serine moiety is linked to residue Ser182. The propeptide at 183-205 is removed in mature form; sequence AAPRLFPLVWAVLLLPLLLLQSQ.

It belongs to the ephrin family. Monomer. Homodimer. Forms heterodimers with EPHA2. Binds to the receptor tyrosine kinases EPHA2, EPHA3, EPHA4, EPHA5, EPHA6 and EPHA7. Also binds with low affinity to EPHA1. Post-translationally, undergoes proteolysis by a metalloprotease to give rise to a soluble monomeric form. N-Glycosylation is required for binding to EPHA2 receptor and inducing its internalization. As to expression, expressed in myogenic progenitor cells.

Its subcellular location is the cell membrane. It localises to the secreted. Cell surface GPI-bound ligand for Eph receptors, a family of receptor tyrosine kinases which are crucial for migration, repulsion and adhesion during neuronal, vascular and epithelial development. Binds promiscuously Eph receptors residing on adjacent cells, leading to contact-dependent bidirectional signaling into neighboring cells. Plays an important role in angiogenesis and tumor neovascularization. The recruitment of VAV2, VAV3 and PI3-kinase p85 subunit by phosphorylated EPHA2 is critical for EFNA1-induced RAC1 GTPase activation and vascular endothelial cell migration and assembly. Exerts anti-oncogenic effects in tumor cells through activation and down-regulation of EPHA2. Activates EPHA2 by inducing tyrosine phosphorylation which leads to its internalization and degradation. Acts as a negative regulator in the tumorigenesis of gliomas by down-regulating EPHA2 and FAK. Can evoke collapse of embryonic neuronal growth cone and regulates dendritic spine morphogenesis. The polypeptide is Ephrin-A1 (Efna1) (Mus musculus (Mouse)).